A 122-amino-acid chain; its full sequence is Ribonuclease P protein component (122 aa).

It belongs to the RnpA family. Consists of a catalytic RNA component (M1 or rnpB) and a protein subunit.

The catalysed reaction is Endonucleolytic cleavage of RNA, removing 5'-extranucleotides from tRNA precursor.. In terms of biological role, RNaseP catalyzes the removal of the 5'-leader sequence from pre-tRNA to produce the mature 5'-terminus. It can also cleave other RNA substrates such as 4.5S RNA. The protein component plays an auxiliary but essential role in vivo by binding to the 5'-leader sequence and broadening the substrate specificity of the ribozyme. The sequence is that of Ribonuclease P protein component from Halorhodospira halophila (strain DSM 244 / SL1) (Ectothiorhodospira halophila (strain DSM 244 / SL1)).